Reading from the N-terminus, the 355-residue chain is UPF0421 protein BCE33L2478 (355 aa).

The next 4 helical transmembrane spans lie at 19–39 (IAVF…IFAV), 74–94 (FTFF…FTIV), 109–129 (TLTA…AFLI), and 131–151 (LATT…ILPP).

This sequence belongs to the UPF0421 family.

The protein localises to the cell membrane. This chain is UPF0421 protein BCE33L2478, found in Bacillus cereus (strain ZK / E33L).